We begin with the raw amino-acid sequence, 98 residues long: Putative pterin-4-alpha-carbinolamine dehydratase (98 aa).

The protein belongs to the pterin-4-alpha-carbinolamine dehydratase family.

The catalysed reaction is (4aS,6R)-4a-hydroxy-L-erythro-5,6,7,8-tetrahydrobiopterin = (6R)-L-erythro-6,7-dihydrobiopterin + H2O. The polypeptide is Putative pterin-4-alpha-carbinolamine dehydratase (Chelativorans sp. (strain BNC1)).